The primary structure comprises 508 residues: ADP-ribosylarginine hydrolase CG3568 (508 aa).

ADP-D-ribose contacts are provided by arginine 209, glycine 349, glycine 351, glycine 353, valine 354, tryptophan 355, tryptophan 390, aspartate 441, asparagine 448, glutamate 449, glycine 459, and aspartate 460.

The enzyme catalyses N(omega)-(ADP-D-ribosyl)-L-arginyl-[protein] + H2O = ADP-D-ribose + L-arginyl-[protein]. It carries out the reaction N(omega)-(ADP-D-ribosyl)-L-arginine + H2O = ADP-D-ribose + L-arginine. In terms of biological role, protein ADP-ribosyl hydrolase that specifically removes mono-ADP-ribosyl modifications from protein arginine residues. The sequence is that of ADP-ribosylarginine hydrolase CG3568 from Drosophila melanogaster (Fruit fly).